The following is a 1340-amino-acid chain: Protein SHORT ROOT IN SALT MEDIUM 1 (1340 aa).

Disordered stretches follow at residues 1 to 73, 161 to 185, 357 to 473, 723 to 750, 784 to 990, and 1063 to 1269; these read MHRD…RSHL, YGEQSSSYLGRELQNEPTRRYADPS, EEER…IRRS, TVEVTKDAEKKSPGDTSGTPTTGTKKTV, PETT…PPRA, and RNQR…KREE. Residues 7 to 39 are compositionally biased toward low complexity; the sequence is SSRGTGYGQQQYGSQSGYSQNLGSGYPGSSVSG. Residues 46–60 are compositionally biased toward polar residues; the sequence is QISLSSRHPSITGAP. Basic and acidic residues-rich tracts occupy residues 173-182, 357-470, and 723-735; these read LQNEPTRRYA, EEER…EASI, and TVEVTKDAEKKSP. Positions 355–426 form a coiled coil; sequence LREEERRRED…RERKRALEIK (72 aa). The span at 810–824 shows a compositional bias: polar residues; that stretch reads GDTSDPSAKANEQTP. Positions 828–840 are enriched in basic residues; that stretch reads IVKKKIIKRVAKR. Composition is skewed to basic and acidic residues over residues 841–872, 887–988, 1069–1097, and 1105–1138; these read KVAEIDNKMDGDSKKDGDSDEKKVMEVGKKSS, EDVK…EEPP, HQEELSVKQNEAKSQDKRQKTAEHEDKEA, and PGKDDKETSGKETVDGSREIADKEAVAKTKETLG. Residues 1052–1086 are a coiled coil; the sequence is LKKLRVKIVRQRNQRKRHQEELSVKQNEAKSQDKR. Positions 1153–1204 are enriched in acidic residues; sequence ENQDEEDDDGDDDPEEDPEEDPEEDPEEDPEEDPEECEEMDVANTEQEEPAE. Composition is skewed to basic and acidic residues over residues 1205–1214 and 1229–1257; these read EPQKKEENLE and TDNRKEERGPNDSKTEIKPKSETEKHGKQ. Residues 1270 to 1305 enclose the EF-hand domain; the sequence is TVDKELLQAFRFFDRNQAGYVRVEDMRVTIHSLGKF.

In terms of assembly, interacts with BHLH148/RITF1. As to expression, expressed ubiquitously at high levels, including in guard cells.

The protein resides in the nucleus. Required for salt tolerance and sodium (Na) homeostasis after salt stress. Together with BHLH148/RITF1, regulates the transcription of several genes involved in the detoxification of reactive oxygen species (ROS) generated by salt (NaCl) stress. Binds calcium. This is Protein SHORT ROOT IN SALT MEDIUM 1 from Arabidopsis thaliana (Mouse-ear cress).